The primary structure comprises 113 residues: UPF0482 protein YnfB (113 aa).

A signal peptide spans 1 to 28 (MKITLSKRIGLLAFLLPCALALSTTVHA).

This sequence belongs to the UPF0482 family.

The chain is UPF0482 protein YnfB from Shigella flexneri serotype 5b (strain 8401).